Reading from the N-terminus, the 122-residue chain is Large ribosomal subunit protein bL12 (122 aa).

It belongs to the bacterial ribosomal protein bL12 family. Homodimer. Part of the ribosomal stalk of the 50S ribosomal subunit. Forms a multimeric L10(L12)X complex, where L10 forms an elongated spine to which 2 to 4 L12 dimers bind in a sequential fashion. Binds GTP-bound translation factors.

Its function is as follows. Forms part of the ribosomal stalk which helps the ribosome interact with GTP-bound translation factors. Is thus essential for accurate translation. This Xylella fastidiosa (strain M12) protein is Large ribosomal subunit protein bL12.